Reading from the N-terminus, the 539-residue chain is MSSTAENGDAVPGKQNEEKTYKKTASSAIKGAIQLGIGYTVGNLTSKPERDVLMQDFYVVESVFLPSEGSNLTPAHHYPDFRFKTYAPLAFRYFRELFGIKPDDYLYSICSEPLIELSNPGASGSLFFLTSDDEFIIKTVQHKEAEFLQKLLPGYYMNLNQNPRTLLPKFYGLYCMQSGGINIRIVVMNNVLPRAMRMHLTYDLKGSTYKRRASRKEREKPNPTFKDLDFLQDMHEGLYFDTETYNALMKTLQRDCRVLESFKIMDYSLLLGIHILDHSLKDKEEEPLQNVPDAKRPGMQKVLYSTAMESIQGPGKSADGIIAENPDTMGGIPAKSHKGEKLLLFMGIIDILQSYRLMKKLEHSWKALVYDGDTVSVHRPSFYADRFLKFMNSRVFKKIQALKASPSKKRCNSIAALKATSQEIVSSISQEWKDEKRDLLTEGQSFSSLDEEALGSRHRPDLVPSTPSLFEAASLATTISSSSLYVGEHYPHDRTTLYSNSKGLPSSSTFTLEEGTIYLTAEPNTLDLQDDASVLDVYL.

Residues 1 to 21 (MSSTAENGDAVPGKQNEEKTY) form a disordered region. Residues 25 to 395 (ASSAIKGAIQ…RFLKFMNSRV (371 aa)) form the PIPK domain. 3 positions are modified to phosphoserine: Ser-445, Ser-447, and Ser-448.

As to quaternary structure, interacts with RAC1, AJUBA, PLD1, PLD2 and ARF1. In terms of tissue distribution, highly expressed in brain and testis. Barely detectable in liver and skeletal muscle.

It is found in the cytoplasm. The protein resides in the cytosol. Its subcellular location is the cell membrane. The protein localises to the endomembrane system. The catalysed reaction is a 1,2-diacyl-sn-glycero-3-phospho-(1D-myo-inositol 4-phosphate) + ATP = a 1,2-diacyl-sn-glycero-3-phospho-(1D-myo-inositol-4,5-bisphosphate) + ADP + H(+). It catalyses the reaction 1-octadecanoyl-2-(5Z,8Z,11Z,14Z)-eicosatetraenoyl-sn-glycero-3-phospho-1D-myo-inositol 4-phosphate + ATP = 1-octadecanoyl-2-(5Z,8Z,11Z,14Z)-eicosatetraenoyl-sn-glycero-3-phospho-1D-myo-inositol 4,5-bisphosphate + ADP + H(+). It carries out the reaction 1-octadecanoyl-2-(9Z)-octadecenoyl-sn-glycero-3-phospho-1D-myo-inositol 4-phosphate + ATP = 1-octadecanoyl-2-(9Z)-octadecenoyl-sn-glycero-3-phospho-1D-myo-inositol 4,5-bisphosphate + ADP + H(+). The enzyme catalyses 1-octadecanoyl-2-(9Z)-octadecenoyl-sn-glycero-3-phospho-1D-myo-inositol + ATP = 1-octadecanoyl-2-(9Z)-octadecenoyl-sn-glycero-3-phospho-1D-myo-inositol 5-phosphate + ADP + H(+). The catalysed reaction is 1-octadecanoyl-2-(9Z,12Z)-octadecadienoyl-sn-glycero-3-phospho-1D-myo-inositol + ATP = 1-octadecanoyl-2-(9Z,12Z)-octadecadienoyl-sn-glycero-3-phospho-1D-myo-inositol 5-phosphate + ADP + H(+). It catalyses the reaction 1-octadecanoyl-2-(5Z,8Z,11Z,14Z-eicosatetraenoyl)-sn-glycero-3-phospho-(1D-myo-inositol) + ATP = 1-octadecanoyl-2-(5Z,8Z,11Z,14Z)-eicosatetraenoyl-sn-glycero-3-phospho-1D-myo-inositol 5-phosphate + ADP + H(+). It carries out the reaction 1,2-di-(9Z,12Z)-octadecadienoyl-sn-glycero-3-phospho-1D-myo-inositol + ATP = 1,2-di(9Z,12Z)-octadecadienoyl-sn-glycero-3-phospho-1D-myo-inositol 5-phosphate + ADP + H(+). Activated by phosphatidic acid. Catalyzes the phosphorylation of phosphatidylinositol 4-phosphate (PtdIns(4)P/PI4P) to form phosphatidylinositol 4,5-bisphosphate (PtdIns(4,5)P2/PIP2), a lipid second messenger that regulates several cellular processes such as signal transduction, vesicle trafficking, actin cytoskeleton dynamics, cell adhesion, and cell motility. PtdIns(4,5)P2 can directly act as a second messenger or can be utilized as a precursor to generate other second messengers: inositol 1,4,5-trisphosphate (IP3), diacylglycerol (DAG) or phosphatidylinositol-3,4,5-trisphosphate (PtdIns(3,4,5)P3/PIP3). Mediates RAC1-dependent reorganization of actin filaments. Contributes to the activation of phospholipase PLD2. Together with PIP5K1A, is required, after stimulation by G-protein coupled receptors, for the synthesis of IP3 that will induce stable platelet adhesion. The polypeptide is Phosphatidylinositol 4-phosphate 5-kinase type-1 beta (Mus musculus (Mouse)).